Reading from the N-terminus, the 227-residue chain is Phosphoribosylformylglycinamidine synthase subunit PurQ (227 aa).

Residues 2–226 (KFAVIQFPGS…VKAWKEEQVN (225 aa)) enclose the Glutamine amidotransferase type-1 domain. C86 serves as the catalytic Nucleophile. Active-site residues include H195 and E197.

As to quaternary structure, part of the FGAM synthase complex composed of 1 PurL, 1 PurQ and 2 PurS subunits.

Its subcellular location is the cytoplasm. It carries out the reaction N(2)-formyl-N(1)-(5-phospho-beta-D-ribosyl)glycinamide + L-glutamine + ATP + H2O = 2-formamido-N(1)-(5-O-phospho-beta-D-ribosyl)acetamidine + L-glutamate + ADP + phosphate + H(+). It catalyses the reaction L-glutamine + H2O = L-glutamate + NH4(+). Its pathway is purine metabolism; IMP biosynthesis via de novo pathway; 5-amino-1-(5-phospho-D-ribosyl)imidazole from N(2)-formyl-N(1)-(5-phospho-D-ribosyl)glycinamide: step 1/2. In terms of biological role, part of the phosphoribosylformylglycinamidine synthase complex involved in the purines biosynthetic pathway. Catalyzes the ATP-dependent conversion of formylglycinamide ribonucleotide (FGAR) and glutamine to yield formylglycinamidine ribonucleotide (FGAM) and glutamate. The FGAM synthase complex is composed of three subunits. PurQ produces an ammonia molecule by converting glutamine to glutamate. PurL transfers the ammonia molecule to FGAR to form FGAM in an ATP-dependent manner. PurS interacts with PurQ and PurL and is thought to assist in the transfer of the ammonia molecule from PurQ to PurL. The chain is Phosphoribosylformylglycinamidine synthase subunit PurQ from Listeria monocytogenes serotype 4b (strain CLIP80459).